Here is a 248-residue protein sequence, read N- to C-terminus: Protein-lysine N-methyltransferase EFM5 (248 aa).

Belongs to the class I-like SAM-binding methyltransferase superfamily. EFM5 family.

It is found in the cytoplasm. S-adenosyl-L-methionine-dependent protein-lysine N-methyltransferase that trimethylates elongation factor 1-alpha (TEF1 and TEF2) at 'Lys-79'. Required for replication of Brome mosaic virus (BMV). The chain is Protein-lysine N-methyltransferase EFM5 from Saccharomyces cerevisiae (strain ATCC 204508 / S288c) (Baker's yeast).